A 99-amino-acid polypeptide reads, in one-letter code: Small ribosomal subunit protein eS24 (99 aa).

It belongs to the eukaryotic ribosomal protein eS24 family.

This chain is Small ribosomal subunit protein eS24, found in Pyrococcus horikoshii (strain ATCC 700860 / DSM 12428 / JCM 9974 / NBRC 100139 / OT-3).